The chain runs to 257 residues: GTP cyclohydrolase 1 type 2 homolog (257 aa).

Positions 65, 103, 221, and 224 each coordinate a divalent metal cation.

The protein belongs to the GTP cyclohydrolase I type 2/NIF3 family. Homohexamer.

The protein is GTP cyclohydrolase 1 type 2 homolog (ykiD) of Lactococcus lactis subsp. lactis (strain IL1403) (Streptococcus lactis).